Reading from the N-terminus, the 54-residue chain is Ovomucoid (54 aa).

Residues 4 to 54 enclose the Kazal-like domain; the sequence is VDCSDYPKPVCTLDYMPLCGSDNKTYSNKCNFCNAVVDSNGTITLSHFGRC. 3 cysteine pairs are disulfide-bonded: C6–C36, C14–C33, and C22–C54. The N-linked (GlcNAc...) asparagine glycan is linked to N43.

The protein resides in the secreted. The polypeptide is Ovomucoid (Coloeus monedula (Eurasian jackdaw)).